A 330-amino-acid polypeptide reads, in one-letter code: DNA repair and recombination protein RadA (330 aa).

124 to 131 provides a ligand contact to ATP; sequence GEFGSGKT.

It belongs to the eukaryotic RecA-like protein family.

Functionally, involved in DNA repair and in homologous recombination. Binds and assemble on single-stranded DNA to form a nucleoprotein filament. Hydrolyzes ATP in a ssDNA-dependent manner and promotes DNA strand exchange between homologous DNA molecules. This Pyrobaculum neutrophilum (strain DSM 2338 / JCM 9278 / NBRC 100436 / V24Sta) (Thermoproteus neutrophilus) protein is DNA repair and recombination protein RadA.